We begin with the raw amino-acid sequence, 318 residues long: Basic leucine zipper (bZIP) transcription factor atfB (318 aa).

The interval 114-157 is disordered; sequence FNSSPPEYAPPKHRSSLSEQSQTDGYGVSTRRRKASAIDQCEQQ. The basic motif stretch occupies residues 160–199; sequence REKREKFLERNRLAASKCRQKKKEHTKLLETRFREVSNKK. The 64-residue stretch at 160–223 folds into the bZIP domain; that stretch reads REKREKFLER…LNLKNEMLRH (64 aa). The interval 202–216 is leucine-zipper; the sequence is LESEIEHLRSEVLNL. The tract at residues 275-301 is disordered; the sequence is DGPMQLPSEMGSPLDQRRDSEQSIMTE.

This sequence belongs to the bZIP family. ATF subfamily.

Its subcellular location is the nucleus. Functionally, transcription factor that acts as a key player in the regulatory circuit that integrates secondary metabolism and cellular response to oxidative stress. Regulates the genes involved in development and stress response through direct binding to their promoters. Particularly involved in the resistance to oxidative stress in asexual conidiospores. The sequence is that of Basic leucine zipper (bZIP) transcription factor atfB from Aspergillus oryzae (strain ATCC 42149 / RIB 40) (Yellow koji mold).